A 329-amino-acid polypeptide reads, in one-letter code: Acetyl-coenzyme A carboxylase carboxyl transferase subunit alpha (329 aa).

A CoA carboxyltransferase C-terminal domain is found at 40-294 (QLETLAARRR…REAIERHLDE (255 aa)).

Belongs to the AccA family. Acetyl-CoA carboxylase is a heterohexamer composed of biotin carboxyl carrier protein (AccB), biotin carboxylase (AccC) and two subunits each of ACCase subunit alpha (AccA) and ACCase subunit beta (AccD).

The protein resides in the cytoplasm. It carries out the reaction N(6)-carboxybiotinyl-L-lysyl-[protein] + acetyl-CoA = N(6)-biotinyl-L-lysyl-[protein] + malonyl-CoA. Its pathway is lipid metabolism; malonyl-CoA biosynthesis; malonyl-CoA from acetyl-CoA: step 1/1. In terms of biological role, component of the acetyl coenzyme A carboxylase (ACC) complex. First, biotin carboxylase catalyzes the carboxylation of biotin on its carrier protein (BCCP) and then the CO(2) group is transferred by the carboxyltransferase to acetyl-CoA to form malonyl-CoA. In Prochlorococcus marinus (strain MIT 9313), this protein is Acetyl-coenzyme A carboxylase carboxyl transferase subunit alpha.